Here is a 187-residue protein sequence, read N- to C-terminus: MTVHIHPYVDNGVKQGSGHFAGGTLVCKCHDRPVKVAVKGDVAHNHACGCTKCWKPSGATFSVIAVVPRQNVTVLENGDKLKIVDPSAVIQRYACTGCGTHMYGRIENTGHPFYGLDFIHPELFQEQGSAAPAFAAFVSSVIESGVKPEQMGEIRARLKELGLEPYDCLSPALMDAIATHVAKAKAA.

A CENP-V/GFA domain is found at 20-167; it reads FAGGTLVCKC…LKELGLEPYD (148 aa). Zn(2+) is bound by residues Cys27, Cys29, Cys48, Cys50, Cys53, Cys95, and Cys98.

It belongs to the Gfa family. Zn(2+) is required as a cofactor.

The catalysed reaction is S-(hydroxymethyl)glutathione = glutathione + formaldehyde. Its pathway is one-carbon metabolism; formaldehyde degradation; formate from formaldehyde (glutathione route): step 1/3. Catalyzes the condensation of formaldehyde and glutathione to S-hydroxymethylglutathione. The chain is Glutathione-dependent formaldehyde-activating enzyme from Bradyrhizobium sp. (strain BTAi1 / ATCC BAA-1182).